We begin with the raw amino-acid sequence, 147 residues long: uncharacterized protein (147 aa).

One can recognise a Response regulatory domain in the interval methionine 1 to serine 59. In terms of domain architecture, HTH luxR-type spans arginine 78 to glycine 143. The segment at residues asparagine 102–leucine 121 is a DNA-binding region (H-T-H motif).

Overexpressed protein is phosphorylated in vitro by non-cognate histidine kinases BarA and UhpB.

This is an uncharacterized protein from Escherichia coli (strain K12).